The sequence spans 400 residues: Multidrug resistance protein MdtH (400 aa).

Topologically, residues 1-12 (MSRVSQARNLGK) are cytoplasmic. The chain crosses the membrane as a helical span at residues 13–33 (YFLLIDNMLVVLGFFVVFPLI). At 34–98 (SIRFVDQMGW…GFATMGIAHE (65 aa)) the chain is on the periplasmic side. Residues 99-116 (PWLLWFSCLLSGLGGTLF) form a helical membrane-spanning segment. The Cytoplasmic segment spans residues 117-138 (DPPRSALVVKLIRPQQRGRFFS). Residues 139–159 (LLMMQDSAGAVIGALLGSWLL) form a helical membrane-spanning segment. At 160-164 (QYDFR) the chain is on the periplasmic side. Residues 165-185 (LVCATGAVLFVLCAAFNAWLL) traverse the membrane as a helical segment. The Cytoplasmic segment spans residues 186–213 (PAWKLSTVRTPVREGMTRVMRDKRFVTY). A helical transmembrane segment spans residues 214–232 (VLTLAGYYMLAVQVMLPIM). The Periplasmic portion of the chain corresponds to 233 to 241 (VNDVAGAPS). Residues 242 to 262 (AVKWMYAIEACLSLTLLYPIA) traverse the membrane as a helical segment. Over 263 to 274 (RWSEKHFRLEHR) the chain is Cytoplasmic. Residues 275–295 (LMAGLLIMSLSMMPVGMVSGL) form a helical membrane-spanning segment. The Periplasmic portion of the chain corresponds to 296 to 297 (QQ). The helical transmembrane segment at 298-318 (LFTLICLFYIGSIIAEPARET) threads the bilayer. Topologically, residues 319–337 (LSASLADARARGSYMGFSR) are cytoplasmic. Residues 338 to 358 (LGLAIGGAIGYIGGGWLFDLG) traverse the membrane as a helical segment. Topologically, residues 359–365 (KSAHQPE) are periplasmic. Residues 366 to 386 (LPWMMLGIIGIFTFLALGWQF) form a helical membrane-spanning segment. At 387-400 (SQKRAARRLLERDA) the chain is on the cytoplasmic side.

This sequence belongs to the major facilitator superfamily. DHA1 family. MdtH (TC 2.A.1.2.21) subfamily.

It is found in the cell inner membrane. The polypeptide is Multidrug resistance protein MdtH (Shigella boydii serotype 4 (strain Sb227)).